Reading from the N-terminus, the 107-residue chain is Putative nucleosome assembly protein 1-like 6 (107 aa).

This sequence belongs to the nucleosome assembly protein (NAP) family.

The polypeptide is Putative nucleosome assembly protein 1-like 6 (Homo sapiens (Human)).